The primary structure comprises 642 residues: Threonine--tRNA ligase (642 aa).

The 61-residue stretch at 1-61 (MPVITLPDGS…ESDAQLAIIT (61 aa)) folds into the TGS domain. A catalytic region spans residues 243-534 (DHRKIGKQLD…LTEEYAGFFP (292 aa)). Zn(2+) contacts are provided by Cys-334, His-385, and His-511.

It belongs to the class-II aminoacyl-tRNA synthetase family. As to quaternary structure, homodimer. It depends on Zn(2+) as a cofactor.

Its subcellular location is the cytoplasm. The enzyme catalyses tRNA(Thr) + L-threonine + ATP = L-threonyl-tRNA(Thr) + AMP + diphosphate + H(+). Functionally, catalyzes the attachment of threonine to tRNA(Thr) in a two-step reaction: L-threonine is first activated by ATP to form Thr-AMP and then transferred to the acceptor end of tRNA(Thr). Also edits incorrectly charged L-seryl-tRNA(Thr). The polypeptide is Threonine--tRNA ligase (Yersinia enterocolitica serotype O:8 / biotype 1B (strain NCTC 13174 / 8081)).